The chain runs to 355 residues: Cyclic nucleotide-gated potassium channel RHE_CH03180 (355 aa).

Residues 1-12 (MSAVPFSKISTP) lie on the Cytoplasmic side of the membrane. A helical transmembrane segment spans residues 13–30 (LNALFATIGLLVVAALTT). At 31 to 38 (QGLTGQER) the chain is on the periplasmic side. The chain crosses the membrane as a helical span at residues 39-61 (LVFELLLAAIWLAYVLQLSGTLL). Residues 62-73 (SRRRRLSGEMTA) are Cytoplasmic-facing. A helical membrane pass occupies residues 74-93 (LVIDLLAVLVPAAAFLFVGS). A helical transmembrane segment spans residues 94–111 (RDRDLYCAIWLLKPLRDS). The Cytoplasmic segment spans residues 112 to 128 (TFFRLLAKVVANESRNL). A helical membrane pass occupies residues 129–149 (LGVTSVFGIVLFGAALAGYII). Residues 150–160 (ERDVQPDKFGS) are Periplasmic-facing. An intramembrane region (pore-forming) is located at residues 161–179 (IPQAMWWAVVTLSTTGYGD). A Selectivity filter motif is present at residues 174-179 (TTGYGD). Residues 180 to 184 (EIPQS) are Periplasmic-facing. Residues 185-209 (LAGRVLAGLVMMSGIGIFALWAGIL) traverse the membrane as a helical segment. The Cytoplasmic segment spans residues 210–355 (ATGFYEEVRR…LERRGGPPKE (146 aa)). 3',5'-cyclic AMP is bound by residues 297–298 (GE), 307–308 (RS), and Arg348.

It belongs to the potassium channel family. As to quaternary structure, homotetramer.

It localises to the cell membrane. Functionally, cyclic nucleotide-regulated potassium channel activated by cAMP. The sequence is that of Cyclic nucleotide-gated potassium channel RHE_CH03180 from Rhizobium etli (strain ATCC 51251 / DSM 11541 / JCM 21823 / NBRC 15573 / CFN 42).